Consider the following 304-residue polypeptide: HTH-type transcriptional activator CmpR (304 aa).

The HTH lysR-type domain occupies 1–61 (MKNATLHQFE…EQIGRKIYLT (61 aa)). A DNA-binding region (H-T-H motif) is located at residues 21–40 (FTKAAEELFLTQPTVSQQMK).

Belongs to the LysR transcriptional regulatory family.

Its subcellular location is the cytoplasm. Its function is as follows. Activates transcription of the cmpABCD operon under carbon dioxide-limited conditions. Specifically binds to the cmpR-cmpA intergenic region. The chain is HTH-type transcriptional activator CmpR (cmpR) from Synechocystis sp. (strain ATCC 27184 / PCC 6803 / Kazusa).